The sequence spans 418 residues: MNKLAIIGAQWGDEGKGKVVNYFSQFNDIIVRSSGGANAGHTIYFKDKKYVHHLLPSITFDTDSKGFLAKGMVIELEQMIEELKVLEADFPGISKRFMVDVETFIVLPYHKEEDGLLESMRKNPIGTTKRGIGPAYQDKAARQNVRIIDLFDDELLRERVEEIVYLKNNIYEGKMHIDVDETVNYLLDKFDQLLKLGVTFTSASEIEDEIKNKRVLFEGAQGIMLDLDSGTYPYVTSSTTTAYSASCADVTLTDDDTIMGVVKAYTSRVGEGEFPTELFDEEADKLRKLGNEFGATTGRNRRVGWIDLAQLRYAIKKSKINSIVMTKADVLNGYDKVKVCVGYEIDGVEQKMPFISNDFKKAKPIYKEFDGWNDVFEVNFLKYMTFIEKELDTEISYVSYGPKTEEIMEKRDFIMNIK.

Residues 12-18 and 40-42 each bind GTP; these read GDEGKGK and GHT. Asp-13 acts as the Proton acceptor in catalysis. The Mg(2+) site is built by Asp-13 and Gly-40. Residues 13–16, 38–41, Thr-128, Arg-142, Gln-221, Thr-236, and Arg-299 each bind IMP; these read DEGK and NAGH. His-41 (proton donor) is an active-site residue. Residue 295 to 301 participates in substrate binding; sequence ATTGRNR. Residues Arg-301, 327-329, and 399-401 contribute to the GTP site; these read KAD and SYG.

The protein belongs to the adenylosuccinate synthetase family. As to quaternary structure, homodimer. It depends on Mg(2+) as a cofactor.

The protein localises to the cytoplasm. It catalyses the reaction IMP + L-aspartate + GTP = N(6)-(1,2-dicarboxyethyl)-AMP + GDP + phosphate + 2 H(+). It participates in purine metabolism; AMP biosynthesis via de novo pathway; AMP from IMP: step 1/2. Plays an important role in the de novo pathway of purine nucleotide biosynthesis. Catalyzes the first committed step in the biosynthesis of AMP from IMP. This chain is Adenylosuccinate synthetase, found in Finegoldia magna (strain ATCC 29328 / DSM 20472 / WAL 2508) (Peptostreptococcus magnus).